A 392-amino-acid polypeptide reads, in one-letter code: Dual-specificity RNA methyltransferase RlmN (392 aa).

The active-site Proton acceptor is Glu116. One can recognise a Radical SAM core domain in the interval 122–364; it reads EEGRGTLCVS…SPIRTPRGED (243 aa). Cys129 and Cys369 are disulfide-bonded. 3 residues coordinate [4Fe-4S] cluster: Cys136, Cys140, and Cys143. Residues 195 to 196, Ser227, 249 to 251, and Asn326 each bind S-adenosyl-L-methionine; these read GE and SFH. The active-site S-methylcysteine intermediate is the Cys369.

Belongs to the radical SAM superfamily. RlmN family. It depends on [4Fe-4S] cluster as a cofactor.

It is found in the cytoplasm. It catalyses the reaction adenosine(2503) in 23S rRNA + 2 reduced [2Fe-2S]-[ferredoxin] + 2 S-adenosyl-L-methionine = 2-methyladenosine(2503) in 23S rRNA + 5'-deoxyadenosine + L-methionine + 2 oxidized [2Fe-2S]-[ferredoxin] + S-adenosyl-L-homocysteine. It carries out the reaction adenosine(37) in tRNA + 2 reduced [2Fe-2S]-[ferredoxin] + 2 S-adenosyl-L-methionine = 2-methyladenosine(37) in tRNA + 5'-deoxyadenosine + L-methionine + 2 oxidized [2Fe-2S]-[ferredoxin] + S-adenosyl-L-homocysteine. In terms of biological role, specifically methylates position 2 of adenine 2503 in 23S rRNA and position 2 of adenine 37 in tRNAs. m2A2503 modification seems to play a crucial role in the proofreading step occurring at the peptidyl transferase center and thus would serve to optimize ribosomal fidelity. The protein is Dual-specificity RNA methyltransferase RlmN of Cereibacter sphaeroides (strain ATCC 17029 / ATH 2.4.9) (Rhodobacter sphaeroides).